Here is an 80-residue protein sequence, read N- to C-terminus: Cell division protein ZapB (80 aa).

Residues 3-80 are a coiled coil; the sequence is FEVLEQLESK…ALLGKMDEVE (78 aa). Residues 41–53 show a composition bias toward basic and acidic residues; it reads ANELRSQREELEQ. The tract at residues 41–60 is disordered; sequence ANELRSQREELEQKSQQAQQ.

This sequence belongs to the ZapB family. Homodimer. The ends of the coiled-coil dimer bind to each other, forming polymers. Interacts with FtsZ.

It localises to the cytoplasm. In terms of biological role, non-essential, abundant cell division factor that is required for proper Z-ring formation. It is recruited early to the divisome by direct interaction with FtsZ, stimulating Z-ring assembly and thereby promoting cell division earlier in the cell cycle. Its recruitment to the Z-ring requires functional FtsA or ZipA. The sequence is that of Cell division protein ZapB from Vibrio campbellii (strain ATCC BAA-1116).